We begin with the raw amino-acid sequence, 186 residues long: ATP synthase subunit delta (186 aa).

The protein belongs to the ATPase delta chain family. As to quaternary structure, F-type ATPases have 2 components, F(1) - the catalytic core - and F(0) - the membrane proton channel. F(1) has five subunits: alpha(3), beta(3), gamma(1), delta(1), epsilon(1). F(0) has three main subunits: a(1), b(2) and c(10-14). The alpha and beta chains form an alternating ring which encloses part of the gamma chain. F(1) is attached to F(0) by a central stalk formed by the gamma and epsilon chains, while a peripheral stalk is formed by the delta and b chains.

It is found in the cellular chromatophore membrane. F(1)F(0) ATP synthase produces ATP from ADP in the presence of a proton or sodium gradient. F-type ATPases consist of two structural domains, F(1) containing the extramembraneous catalytic core and F(0) containing the membrane proton channel, linked together by a central stalk and a peripheral stalk. During catalysis, ATP synthesis in the catalytic domain of F(1) is coupled via a rotary mechanism of the central stalk subunits to proton translocation. Its function is as follows. This protein is part of the stalk that links CF(0) to CF(1). It either transmits conformational changes from CF(0) to CF(1) or is implicated in proton conduction. The polypeptide is ATP synthase subunit delta (Rhodobacter capsulatus (Rhodopseudomonas capsulata)).